Reading from the N-terminus, the 435-residue chain is Proline--tRNA ligase (435 aa).

This sequence belongs to the class-II aminoacyl-tRNA synthetase family. ProS type 2 subfamily. Homodimer.

The protein resides in the cytoplasm. It carries out the reaction tRNA(Pro) + L-proline + ATP = L-prolyl-tRNA(Pro) + AMP + diphosphate. Its function is as follows. Catalyzes the attachment of proline to tRNA(Pro) in a two-step reaction: proline is first activated by ATP to form Pro-AMP and then transferred to the acceptor end of tRNA(Pro). This chain is Proline--tRNA ligase, found in Rhodospirillum rubrum (strain ATCC 11170 / ATH 1.1.1 / DSM 467 / LMG 4362 / NCIMB 8255 / S1).